A 556-amino-acid polypeptide reads, in one-letter code: Urocanate hydratase (556 aa).

Residues 52–53, Gln-130, 176–178, Glu-196, Arg-201, 242–243, 263–267, 273–274, and Tyr-322 contribute to the NAD(+) site; these read GG, GMG, NA, QTSAH, and YL. Cys-410 is an active-site residue. An NAD(+)-binding site is contributed by Gly-492.

Belongs to the urocanase family. The cofactor is NAD(+).

Its subcellular location is the cytoplasm. The catalysed reaction is 4-imidazolone-5-propanoate = trans-urocanate + H2O. It participates in amino-acid degradation; L-histidine degradation into L-glutamate; N-formimidoyl-L-glutamate from L-histidine: step 2/3. Catalyzes the conversion of urocanate to 4-imidazolone-5-propionate. This Shewanella oneidensis (strain ATCC 700550 / JCM 31522 / CIP 106686 / LMG 19005 / NCIMB 14063 / MR-1) protein is Urocanate hydratase.